A 416-amino-acid polypeptide reads, in one-letter code: Putative competence-damage inducible protein (416 aa).

The protein belongs to the CinA family.

This Bacillus pumilus (strain SAFR-032) protein is Putative competence-damage inducible protein.